The primary structure comprises 331 residues: Malate dehydrogenase (331 aa).

14–20 (GAAGSIG) contributes to the NAD(+) binding site. Residues Arg-95 and Arg-101 each coordinate substrate. NAD(+) is bound by residues Asn-108, Gln-115, and 132–134 (VGN). The substrate site is built by Asn-134 and Arg-165. Catalysis depends on His-190, which acts as the Proton acceptor.

It belongs to the LDH/MDH superfamily. MDH type 2 family.

The catalysed reaction is (S)-malate + NAD(+) = oxaloacetate + NADH + H(+). Its function is as follows. Catalyzes the reversible oxidation of malate to oxaloacetate. The chain is Malate dehydrogenase from Rhodococcus opacus (strain B4).